Reading from the N-terminus, the 455-residue chain is Transcription factor mokH (455 aa).

The interval 1 to 22 is disordered; sequence MALSPVQDPPSHTDKTMPRRAF. The segment at residues 26–58 is a DNA-binding region (zn(2)-C6 fungal-type); it reads CDRCHAQKIKCIGSEGAVARASCQRCQQAGLRC. Disordered stretches follow at residues 68–113 and 296–317; these read KLPK…DSSG and LTPLEGHQFEPPPSSSRDRSSV. Polar residues predominate over residues 75-88; that stretch reads AESSPASSTAGLHT. The span at 89–113 shows a compositional bias: low complexity; sequence SSSDSSPPVPSDGLPLDLPGPDSSG.

It is found in the nucleus. Transcription factor that regulates the gene cluster that mediates the biosynthesis of monakolin K, also known as lovastatin, and which acts as a potent competitive inhibitor of HMG-CoA reductase. Monakolin K biosynthesis is performed in two stages. The first stage is catalyzed by the nonaketide synthase mokA, which belongs to type I polyketide synthases and catalyzes the iterative nine-step formation of the polyketide. This PKS stage is completed by the action of dehydrogenase mokE, which catalyzes the NADPH-dependent reduction of the unsaturated tetra-, penta- and heptaketide intermediates that arise during the mokA-mediated biosynthesis of the nonaketide chain and leads to dihydromonacolin L. Covalently bound dihydromonacolin L is released from mokA by the mokD esterase. Conversion of dihydromonacolin L into monacolin L and then monacolin J is subsequently performed with the participation of molecular oxygen and P450 monoogygenase mokC. Finally, mokF performs the conversion of monacoline J to monacoline K through the addition of the side-chain diketide moiety (2R)-2-methylbutanoate produced by the diketide synthase mokB. HMG-CoA reductase mokG may act as a down-regulator of monacolin K production. The protein is Transcription factor mokH of Monascus pilosus (Red mold).